The chain runs to 288 residues: Putative aryl-alcohol dehydrogenase AAD10 (288 aa).

The protein belongs to the aldo/keto reductase family. Aldo/keto reductase 2 subfamily.

The protein is Putative aryl-alcohol dehydrogenase AAD10 (AAD10) of Saccharomyces cerevisiae (strain ATCC 204508 / S288c) (Baker's yeast).